We begin with the raw amino-acid sequence, 315 residues long: DNA-directed RNA polymerase subunit alpha (315 aa).

The interval 1-228 (MAQFQIECVE…DLFNPLKDIS (228 aa)) is alpha N-terminal domain (alpha-NTD). Positions 243 to 315 (TAQIPIEELQ…LPQERSSKHN (73 aa)) are alpha C-terminal domain (alpha-CTD).

Belongs to the RNA polymerase alpha chain family. As to quaternary structure, homodimer. In cyanobacteria the RNAP catalytic core is composed of 2 alpha, 1 beta, 1 beta', 1 gamma and 1 omega subunit. When a sigma factor is associated with the core the holoenzyme is formed, which can initiate transcription.

The enzyme catalyses RNA(n) + a ribonucleoside 5'-triphosphate = RNA(n+1) + diphosphate. Its function is as follows. DNA-dependent RNA polymerase catalyzes the transcription of DNA into RNA using the four ribonucleoside triphosphates as substrates. This is DNA-directed RNA polymerase subunit alpha from Nostoc sp. (strain PCC 7120 / SAG 25.82 / UTEX 2576).